A 205-amino-acid polypeptide reads, in one-letter code: Large ribosomal subunit protein uL3 (205 aa).

This sequence belongs to the universal ribosomal protein uL3 family. In terms of assembly, part of the 50S ribosomal subunit. Forms a cluster with proteins L14 and L19.

Functionally, one of the primary rRNA binding proteins, it binds directly near the 3'-end of the 23S rRNA, where it nucleates assembly of the 50S subunit. The polypeptide is Large ribosomal subunit protein uL3 (Porphyromonas gingivalis (strain ATCC 33277 / DSM 20709 / CIP 103683 / JCM 12257 / NCTC 11834 / 2561)).